The sequence spans 102 residues: Large ribosomal subunit protein mL63 (102 aa).

The protein belongs to the mitochondrion-specific ribosomal protein mL63 family. Component of the mitochondrial large ribosomal subunit (mt-LSU). Mature mammalian 55S mitochondrial ribosomes consist of a small (28S) and a large (39S) subunit. The 28S small subunit contains a 12S ribosomal RNA (12S mt-rRNA) and 30 different proteins. The 39S large subunit contains a 16S rRNA (16S mt-rRNA), a copy of mitochondrial valine transfer RNA (mt-tRNA(Val)), which plays an integral structural role, and 52 different proteins.

Its subcellular location is the mitochondrion. The chain is Large ribosomal subunit protein mL63 (MRPL57) from Homo sapiens (Human).